We begin with the raw amino-acid sequence, 647 residues long: 1-deoxy-D-xylulose-5-phosphate synthase (647 aa).

Thiamine diphosphate is bound by residues H79 and 120–122 (GHA). A Mg(2+)-binding site is contributed by D152. Residues 153–154 (GS), N181, F293, and E377 each bind thiamine diphosphate. A Mg(2+)-binding site is contributed by N181.

The protein belongs to the transketolase family. DXPS subfamily. In terms of assembly, homodimer. It depends on Mg(2+) as a cofactor. Thiamine diphosphate is required as a cofactor.

The catalysed reaction is D-glyceraldehyde 3-phosphate + pyruvate + H(+) = 1-deoxy-D-xylulose 5-phosphate + CO2. It participates in metabolic intermediate biosynthesis; 1-deoxy-D-xylulose 5-phosphate biosynthesis; 1-deoxy-D-xylulose 5-phosphate from D-glyceraldehyde 3-phosphate and pyruvate: step 1/1. Functionally, catalyzes the acyloin condensation reaction between C atoms 2 and 3 of pyruvate and glyceraldehyde 3-phosphate to yield 1-deoxy-D-xylulose-5-phosphate (DXP). In Bacteroides thetaiotaomicron (strain ATCC 29148 / DSM 2079 / JCM 5827 / CCUG 10774 / NCTC 10582 / VPI-5482 / E50), this protein is 1-deoxy-D-xylulose-5-phosphate synthase.